A 236-amino-acid chain; its full sequence is Eukaryotic translation initiation factor 3 subunit J (236 aa).

Residues 1-65 form a disordered region; sequence MADDWESAAD…APAKPKPNKA (65 aa). A compositionally biased stretch (acidic residues) spans 28–46; it reads GEDEDEDIKDSWEDEEEKK. Basic and acidic residues predominate over residues 47-58; the sequence is DEEKPTKTEAPA.

This sequence belongs to the eIF-3 subunit J family. In terms of assembly, component of the eukaryotic translation initiation factor 3 (eIF-3) complex. The eIF-3 complex interacts with pix.

It is found in the cytoplasm. In terms of biological role, component of the eukaryotic translation initiation factor 3 (eIF-3) complex, which is involved in protein synthesis of a specialized repertoire of mRNAs and, together with other initiation factors, stimulates binding of mRNA and methionyl-tRNAi to the 40S ribosome. The eIF-3 complex specifically targets and initiates translation of a subset of mRNAs involved in cell proliferation. This is Eukaryotic translation initiation factor 3 subunit J from Drosophila melanogaster (Fruit fly).